Consider the following 410-residue polypeptide: BTB/POZ and MATH domain-containing protein 5 (410 aa).

Residues 1–24 form a disordered region; sequence MSESVIQGSNPDRVLSPTSSKSVT. Positions 28–162 constitute an MATH domain; that stretch reads NGSHQFVIQG…DDCLIINCTV (135 aa). In terms of domain architecture, BTB spans 198–264; sequence SDITFNIAGE…MYKDSLPEDV (67 aa).

This sequence belongs to the Tdpoz family. In terms of assembly, heterodimer with BPM1 and BPM3. Interacts with RAP2-4. Binds to MYB56 at the promoter of FLOWERING LOCUS T (FT). In terms of tissue distribution, ubiquitous.

The protein resides in the nucleus. Its subcellular location is the cytoplasm. It functions in the pathway protein modification; protein ubiquitination. May act as a substrate-specific adapter of an E3 ubiquitin-protein ligase complex (CUL3-RBX1-BTB) which mediates the ubiquitination and subsequent proteasomal degradation of target proteins. This chain is BTB/POZ and MATH domain-containing protein 5 (BPM5), found in Arabidopsis thaliana (Mouse-ear cress).